A 347-amino-acid polypeptide reads, in one-letter code: MGIALMFLLALYQMQSAIHSEIIDTPNYAGNSLQDADSEVSPSQDNDLVDALLGNDQTERAELEFRHPISVIGIDYSKNAVVLHFQKHGRKPRYKYDPELEAKRRSVQDNFMHFGKRQAEQLPPEGSYAGSDELEGMAKRAAMDRYGRDPKQDFMRFGRDPKQDFMRFGRDPKQDFMRFGRDPKQDFMRFGRDPKQDFMRFGRTPAEDFMRFGRTPAEDFMRFGRSDNFMRFGRSPHEELRSPKQDFMRFGRPDNFMRFGRSAPQDFVRSGKMDSNFIRFGKSLKPAAPESKPVKSNQGNPGERSPVDKAMTELFKKQELQDQQVKNGAQATTTQDGSVEQDQFFGQ.

Positions 1 to 22 are cleaved as a signal peptide; sequence MGIALMFLLALYQMQSAIHSEI. The propeptide occupies 23–102; that stretch reads IDTPNYAGNS…RYKYDPELEA (80 aa). Phenylalanine amide is present on Phe114. Tyr146 is subject to Tyrosine amide. Residues Phe157, Phe168, Phe179, Phe190, Phe201, Phe212, Phe223, and Phe232 each carry the phenylalanine amide modification. Residues 235 to 240 constitute a propeptide that is removed on maturation; sequence SPHEEL. Phenylalanine amide occurs at positions 250 and 259. Residue Ser270 is modified to Serine amide. Position 280 is a phenylalanine amide (Phe280). Positions 283–347 are excised as a propeptide; that stretch reads SLKPAAPESK…SVEQDQFFGQ (65 aa). Residues 283–347 form a disordered region; it reads SLKPAAPESK…SVEQDQFFGQ (65 aa). The segment covering 305 to 320 has biased composition (basic and acidic residues); it reads SPVDKAMTELFKKQEL. Over residues 321 to 347 the composition is skewed to polar residues; sequence QDQQVKNGAQATTTQDGSVEQDQFFGQ.

It belongs to the FARP (FMRFamide related peptide) family. This precursor includes 13 peptides that have FMRF or related sequences at their C-termini, and other putative neuropeptides.

The protein localises to the secreted. Functionally, in insects, FMRFamide and related peptides have modulatory actions at skeletal neuromuscular junctions, and peptides that are immunologically related to FMRFamide are released into the circulation from neurohemal organs. This Drosophila melanogaster (Fruit fly) protein is FMRFamide-related peptides.